The sequence spans 88 residues: Small ribosomal subunit protein bS16 (88 aa).

It belongs to the bacterial ribosomal protein bS16 family.

This chain is Small ribosomal subunit protein bS16, found in Mycoplasmopsis pulmonis (strain UAB CTIP) (Mycoplasma pulmonis).